The following is a 530-amino-acid chain: Na(+)/H(+) antiporter NhaB (530 aa).

A run of 13 helical transmembrane segments spans residues 13–33, 34–54, 64–84, 90–110, 113–133, 136–156, 205–225, 234–254, 306–326, 351–371, 378–400, 450–470, and 481–501; these read FLGK…IINP, FVFF…EFIF, PLQP…TSPA, LVAN…IYFM, LLLY…LLSL, CLMA…AVVI, LLMH…VGEP, AGWL…PVFM, ALIA…VGLI, EEAL…AVII, PIIS…IANG, ATPN…APLI, and ALPY…FMLL.

Belongs to the NhaB Na(+)/H(+) (TC 2.A.34) antiporter family.

It localises to the cell inner membrane. The enzyme catalyses 2 Na(+)(in) + 3 H(+)(out) = 2 Na(+)(out) + 3 H(+)(in). Na(+)/H(+) antiporter that extrudes sodium in exchange for external protons. In Photobacterium profundum (strain SS9), this protein is Na(+)/H(+) antiporter NhaB.